A 618-amino-acid chain; its full sequence is Vacuolar-sorting receptor 5 (618 aa).

Residues 1–23 (MSPSNKGTVLALILALTMVVVNG) form the signal peptide. The Lumenal segment spans residues 24–563 (FSSRFFVEKS…IERRSGSRSR (540 aa)). The PA domain maps to 58-164 (KYGGFMIGSV…SFGDSLKKAL (107 aa)). 3 N-linked (GlcNAc...) asparagine glycosylation sites follow: Asn-81, Asn-293, and Asn-430. 2 EGF-like domains span residues 412 to 462 (ETNE…TSCK) and 465 to 511 (GPAR…LKCE). 7 cysteine pairs are disulfide-bonded: Cys-416–Cys-434, Cys-423–Cys-443, Cys-445–Cys-461, Cys-469–Cys-489, Cys-476–Cys-497, Cys-499–Cys-510, and Cys-540–Cys-553. Residues 512–554 (DIDECKEKSACKCDGCKCKNNWGGYECKCSNNSIYMKEEDTCI) form the EGF-like 3; calcium-binding domain. A glycan (N-linked (GlcNAc...) asparagine) is linked at Asn-542. Residues 564-584 (GLFTIVVLTAIAGISLGAYIF) traverse the membrane as a helical segment. Residues 585–618 (YKYHLQSYMDSEIVSIMSQYIPLDSQSINQDSFK) are Cytoplasmic-facing. The Tyrosine-based internalization motif motif lies at 604 to 607 (YIPL).

This sequence belongs to the VSR (BP-80) family. As to expression, expressed in seedlings, roots, leaves, flowers and siliques.

The protein localises to the membrane. The protein resides in the golgi apparatus membrane. It localises to the cytoplasmic vesicle. Its subcellular location is the clathrin-coated vesicle membrane. It is found in the prevacuolar compartment membrane. Vacuolar-sorting receptor (VSR) involved in clathrin-coated vesicles sorting from Golgi apparatus to vacuoles. This Arabidopsis thaliana (Mouse-ear cress) protein is Vacuolar-sorting receptor 5 (VSR5).